A 214-amino-acid polypeptide reads, in one-letter code: Charged multivesicular body protein 2b-B (214 aa).

Residues 25 to 55 (QRAITRDRAALEKQEKQLEMEIKKMAKTGNK) adopt a coiled-coil conformation. Residues 178–200 (MAKAPSAAKGLPSTSAAKSKGIS) form a disordered region. Residues 202-212 (EEIERQLKALG) carry the MIT-interacting motif motif.

It belongs to the SNF7 family. As to quaternary structure, probable core component of the endosomal sorting required for transport complex III (ESCRT-III). ESCRT-III components are thought to multimerize to form a flat lattice on the perimeter membrane of the endosome.

It localises to the cytoplasm. It is found in the cytosol. The protein resides in the late endosome membrane. Functionally, probable core component of the endosomal sorting required for transport complex III (ESCRT-III) which is involved in multivesicular bodies (MVBs) formation and sorting of endosomal cargo proteins into MVBs. MVBs contain intraluminal vesicles (ILVs) that are generated by invagination and scission from the limiting membrane of the endosome and mostly are delivered to lysosomes enabling degradation of membrane proteins, such as stimulated growth factor receptors, lysosomal enzymes and lipids. This chain is Charged multivesicular body protein 2b-B (chmp2b-b), found in Xenopus laevis (African clawed frog).